We begin with the raw amino-acid sequence, 176 residues long: Disulfide bond formation protein B (176 aa).

Residues 1 to 14 are Cytoplasmic-facing; sequence MLRFLNQCSQGRGA. A helical transmembrane segment spans residues 15–31; the sequence is WLLMAFTALALELTALW. Over 32-49 the chain is Periplasmic; that stretch reads FQHVMLLKPCVLCIYERC. Cysteines 41 and 44 form a disulfide. The chain crosses the membrane as a helical span at residues 50–65; that stretch reads ALFGVLGAALIGAIAP. At 66-71 the chain is on the cytoplasmic side; that stretch reads KTPLRY. A helical transmembrane segment spans residues 72–89; that stretch reads VAMVIWLYSAFRGVQLTY. At 90–144 the chain is on the periplasmic side; it reads EHTMLQLYPSPFATCDFMVRFPEWLPLDKWVPQVFVASGDCAERQWDFLGLEMPQ. Cysteines 104 and 130 form a disulfide. A helical transmembrane segment spans residues 145–163; the sequence is WLLGIFIAYLIVAVLVMIS. Topologically, residues 164-176 are cytoplasmic; the sequence is QPFKAKKRDLFGR.

It belongs to the DsbB family.

The protein localises to the cell inner membrane. Its function is as follows. Required for disulfide bond formation in some periplasmic proteins. Acts by oxidizing the DsbA protein. The protein is Disulfide bond formation protein B of Shigella sonnei (strain Ss046).